The chain runs to 90 residues: UPF0297 protein lwe1516 (90 aa).

Belongs to the UPF0297 family.

The polypeptide is UPF0297 protein lwe1516 (Listeria welshimeri serovar 6b (strain ATCC 35897 / DSM 20650 / CCUG 15529 / CIP 8149 / NCTC 11857 / SLCC 5334 / V8)).